The sequence spans 118 residues: Ribosome-binding factor A (118 aa).

Belongs to the RbfA family. In terms of assembly, monomer. Binds 30S ribosomal subunits, but not 50S ribosomal subunits or 70S ribosomes.

Its subcellular location is the cytoplasm. One of several proteins that assist in the late maturation steps of the functional core of the 30S ribosomal subunit. Associates with free 30S ribosomal subunits (but not with 30S subunits that are part of 70S ribosomes or polysomes). Required for efficient processing of 16S rRNA. May interact with the 5'-terminal helix region of 16S rRNA. This is Ribosome-binding factor A from Clostridium beijerinckii (strain ATCC 51743 / NCIMB 8052) (Clostridium acetobutylicum).